Here is a 497-residue protein sequence, read N- to C-terminus: Aluminum-activated malate transporter 10 (497 aa).

Helical transmembrane passes span 66-86, 88-108, 123-143, 148-168, 173-193, and 210-230; these read KVVHCLKVGLALSLVSIFYYM, PLYDGVGGNAMWAIMTVVVVF, VVATILAGSLGIAVHWVATQS, VFVIGCSVFLFAFAATYSRFV, ARFDYGAMIFILTFSLVSVGG, and IAIGTSICIIITVFFCPIWAG. 2 disordered regions span residues 413 to 437 and 476 to 497; these read PIETNKPEEVPSEEENKVDSEERTT and DFEQDSKKKTGDNNTKQPPLSS. The segment covering 417–436 has biased composition (basic and acidic residues); the sequence is NKPEEVPSEEENKVDSEERT. Over residues 487–497 the composition is skewed to polar residues; that stretch reads DNNTKQPPLSS.

Belongs to the aromatic acid exporter (TC 2.A.85) family.

The protein resides in the membrane. Malate transporter. The sequence is that of Aluminum-activated malate transporter 10 (ALMT10) from Arabidopsis thaliana (Mouse-ear cress).